The chain runs to 407 residues: Putative aspartate aminotransferase, cytoplasmic 2 (407 aa).

Position 249 is an N6-(pyridoxal phosphate)lysine (lysine 249).

The protein belongs to the class-I pyridoxal-phosphate-dependent aminotransferase family. Homodimer. The cofactor is pyridoxal 5'-phosphate.

The protein localises to the cytoplasm. The enzyme catalyses L-aspartate + 2-oxoglutarate = oxaloacetate + L-glutamate. In Bos taurus (Bovine), this protein is Putative aspartate aminotransferase, cytoplasmic 2 (GOT1L1).